The following is a 420-amino-acid chain: Probable protein phosphatase 2C 73 (420 aa).

The region spanning 33-336 is the PPM-type phosphatase domain; the sequence is GVSMHTKQGW…DDCAVVCLFL (304 aa). Mn(2+)-binding residues include Asp69 and Gly70. The span at 96 to 105 shows a compositional bias: polar residues; the sequence is LKTEQDPSSN. The interval 96-119 is disordered; the sequence is LKTEQDPSSNTDKETLEKSDCTSL. The span at 106–115 shows a compositional bias: basic and acidic residues; sequence TDKETLEKSD. Residues Asp281 and Asp327 each contribute to the Mn(2+) site.

This sequence belongs to the PP2C family. Mg(2+) is required as a cofactor. Requires Mn(2+) as cofactor.

It catalyses the reaction O-phospho-L-seryl-[protein] + H2O = L-seryl-[protein] + phosphate. The catalysed reaction is O-phospho-L-threonyl-[protein] + H2O = L-threonyl-[protein] + phosphate. This chain is Probable protein phosphatase 2C 73, found in Oryza sativa subsp. japonica (Rice).